Consider the following 180-residue polypeptide: Pro-glucagon (180 aa).

Residues 1 to 20 (MKSIYFVAGLFVMLVQGSWQ) form the signal peptide. The disordered stretch occupies residues 26-59 (TEEKSRSFSASQADPLSDPDQMNEDKRHSQGTFT). Residue S54 is modified to Phosphoserine. Positions 84–89 (NRNNIA) are excised as a propeptide. Phosphoserine is present on residues S105 and S108. An Arginine amide modification is found at R127. Positions 131–145 (DFPEEVAIVEELGRR) are excised as a propeptide. Phosphoserine occurs at positions 150 and 152.

It belongs to the glucagon family. Post-translationally, proglucagon is post-translationally processed in a tissue-specific manner in pancreatic A cells and intestinal L cells. In pancreatic A cells, the major bioactive hormone is glucagon cleaved by PCSK2/PC2. In the intestinal L cells PCSK1/PC1 liberates GLP-1, GLP-2, glicentin and oxyntomodulin. GLP-1 is further N-terminally truncated by post-translational processing in the intestinal L cells resulting in GLP-1(7-37) GLP-1-(7-36)amide. The C-terminal amidation is neither important for the metabolism of GLP-1 nor for its effects on the endocrine pancreas. In terms of tissue distribution, secreted in the A cells of the islets of Langerhans. As to expression, secreted in the A cells of the islets of Langerhans. Secreted from enteroendocrine L cells throughout the gastrointestinal tract. Also secreted in selected neurons in the brain. Secreted from enteroendocrine cells throughout the gastrointestinal tract. Also secreted in selected neurons in the brain. In terms of tissue distribution, secreted from enteroendocrine cells throughout the gastrointestinal tract.

It is found in the secreted. Plays a key role in glucose metabolism and homeostasis. Regulates blood glucose by increasing gluconeogenesis and decreasing glycolysis. A counterregulatory hormone of insulin, raises plasma glucose levels in response to insulin-induced hypoglycemia. Plays an important role in initiating and maintaining hyperglycemic conditions in diabetes. Functionally, potent stimulator of glucose-dependent insulin release. Also stimulates insulin release in response to IL6. Plays important roles on gastric motility and the suppression of plasma glucagon levels. May be involved in the suppression of satiety and stimulation of glucose disposal in peripheral tissues, independent of the actions of insulin. Has growth-promoting activities on intestinal epithelium. May also regulate the hypothalamic pituitary axis (HPA) via effects on LH, TSH, CRH, oxytocin, and vasopressin secretion. Increases islet mass through stimulation of islet neogenesis and pancreatic beta cell proliferation. Inhibits beta cell apoptosis. In terms of biological role, stimulates intestinal growth and up-regulates villus height in the small intestine, concomitant with increased crypt cell proliferation and decreased enterocyte apoptosis. The gastrointestinal tract, from the stomach to the colon is the principal target for GLP-2 action. Plays a key role in nutrient homeostasis, enhancing nutrient assimilation through enhanced gastrointestinal function, as well as increasing nutrient disposal. Stimulates intestinal glucose transport and decreases mucosal permeability. Its function is as follows. Significantly reduces food intake. Inhibits gastric emptying in humans. Suppression of gastric emptying may lead to increased gastric distension, which may contribute to satiety by causing a sensation of fullness. May modulate gastric acid secretion and the gastro-pyloro-duodenal activity. May play an important role in intestinal mucosal growth in the early period of life. The protein is Pro-glucagon of Homo sapiens (Human).